A 710-amino-acid polypeptide reads, in one-letter code: Putative membrane protein IgaA homolog (710 aa).

Position 1 (M1) is a topological domain, periplasmic. Residues 2–22 (STILIFIAALLACSLLAIWRF) form a helical membrane-spanning segment. Residues 23 to 204 (RVKSRRGSLP…YALSRPAGLR (182 aa)) lie on the Cytoplasmic side of the membrane. 2 helical membrane passes run 205 to 225 (EALLIVASFLLFFFCLITPDV) and 226 to 246 (FVPWMIGGAILLLAAGLWGLF). Residues 247-339 (APPSKSALRE…KNFPLQHWLR (93 aa)) lie on the Cytoplasmic side of the membrane. Residues 340 to 360 (STVIAIGSLLVLFMLLFWIPL) traverse the membrane as a helical segment. At 361–656 (DMPIKFTLSW…PDKSGWWRYL (296 aa)) the chain is on the periplasmic side. A helical membrane pass occupies residues 657–677 (GTTLLMLAMIVSAVYNGIQAF). Residues 678-710 (RRYQRHRTRMADIQEYYESCLNPRLTVSPENLI) lie on the Cytoplasmic side of the membrane.

The protein belongs to the IgaA family.

The protein resides in the cell inner membrane. This Salmonella typhi protein is Putative membrane protein IgaA homolog (yrfF).